A 359-amino-acid polypeptide reads, in one-letter code: MPPLPLITAQTEEKLLAFLTEHGHTKFRTQQVLDWVWRKRVTTFDAMSNLPPALKNLLAENFRFHTPEIVEIHGSADTTRKFLTKMEDGSLVESVIIPAAAAENGEKSERVTLCVSSQVGCAFGCKFCASGLLGLKRHLTTGEIIGQILSAEAIAGKRVNNIVFMGMGEPLSNFDNLADALEIITSHRGLEIGARHITISTSGFVPGLKKLAAYPRQIRLAVSLHGATDEVRDQIMPVNKKWPLSQLIPALEEWNRGRNQMPTLEYILIRDINDSPKDASHLVRIAKRLHAKVNLIPYNTVEGLPWKRPSEERCRSFRDAVHKARIPVTMRYEKGHDINAACGQLRLRKEQEKSGKTSR.

Residue Glu-93 is the Proton acceptor of the active site. One can recognise a Radical SAM core domain in the interval 107–337 (KSERVTLCVS…VTMRYEKGHD (231 aa)). Cys-114 and Cys-342 are disulfide-bonded. The [4Fe-4S] cluster site is built by Cys-121, Cys-125, and Cys-128. Residues 168 to 169 (GE), Ser-200, 223 to 225 (SLH), and Asn-299 contribute to the S-adenosyl-L-methionine site. Cys-342 (S-methylcysteine intermediate) is an active-site residue.

This sequence belongs to the radical SAM superfamily. RlmN family. [4Fe-4S] cluster is required as a cofactor.

The protein localises to the cytoplasm. It carries out the reaction adenosine(2503) in 23S rRNA + 2 reduced [2Fe-2S]-[ferredoxin] + 2 S-adenosyl-L-methionine = 2-methyladenosine(2503) in 23S rRNA + 5'-deoxyadenosine + L-methionine + 2 oxidized [2Fe-2S]-[ferredoxin] + S-adenosyl-L-homocysteine. The enzyme catalyses adenosine(37) in tRNA + 2 reduced [2Fe-2S]-[ferredoxin] + 2 S-adenosyl-L-methionine = 2-methyladenosine(37) in tRNA + 5'-deoxyadenosine + L-methionine + 2 oxidized [2Fe-2S]-[ferredoxin] + S-adenosyl-L-homocysteine. In terms of biological role, specifically methylates position 2 of adenine 2503 in 23S rRNA and position 2 of adenine 37 in tRNAs. The sequence is that of Probable dual-specificity RNA methyltransferase RlmN from Akkermansia muciniphila (strain ATCC BAA-835 / DSM 22959 / JCM 33894 / BCRC 81048 / CCUG 64013 / CIP 107961 / Muc).